We begin with the raw amino-acid sequence, 216 residues long: Large ribosomal subunit protein uL1 (216 aa).

The protein belongs to the universal ribosomal protein uL1 family. As to quaternary structure, component of the large ribosomal subunit.

The protein localises to the cytoplasm. In terms of biological role, component of the large ribosomal subunit. The ribosome is a large ribonucleoprotein complex responsible for the synthesis of proteins in the cell. This is Large ribosomal subunit protein uL1 (rpl10a) from Danio rerio (Zebrafish).